The chain runs to 282 residues: Pantothenate synthetase (282 aa).

Residue 30–37 participates in ATP binding; it reads MGYLHEGH. Residue His37 is the Proton donor of the active site. Residue Gln61 participates in (R)-pantoate binding. Gln61 provides a ligand contact to beta-alanine. 147–150 is a binding site for ATP; it reads GMKD. Gln153 serves as a coordination point for (R)-pantoate. Residues Val176 and 184–187 contribute to the ATP site; that span reads KSSR.

It belongs to the pantothenate synthetase family. Homodimer.

The protein localises to the cytoplasm. It catalyses the reaction (R)-pantoate + beta-alanine + ATP = (R)-pantothenate + AMP + diphosphate + H(+). It functions in the pathway cofactor biosynthesis; (R)-pantothenate biosynthesis; (R)-pantothenate from (R)-pantoate and beta-alanine: step 1/1. Catalyzes the condensation of pantoate with beta-alanine in an ATP-dependent reaction via a pantoyl-adenylate intermediate. In Bacillus cytotoxicus (strain DSM 22905 / CIP 110041 / 391-98 / NVH 391-98), this protein is Pantothenate synthetase.